The following is an 82-amino-acid chain: MDSIISAASVIAAGLAIGLAAIGPGIGQGNAAGQAVEGIARQPEAENKIRGTLLLSLAFMEALTIYGLVVALALLFANPFNS.

Helical transmembrane passes span 4–24 and 57–77; these read IISAASVIAAGLAIGLAAIGP and LAFMEALTIYGLVVALALLFA.

This sequence belongs to the ATPase C chain family. As to quaternary structure, F-type ATPases have 2 components, F(1) - the catalytic core - and F(0) - the membrane proton channel. F(1) has five subunits: alpha(3), beta(3), gamma(1), delta(1), epsilon(1). F(0) has four main subunits: a(1), b(1), b'(1) and c(10-14). The alpha and beta chains form an alternating ring which encloses part of the gamma chain. F(1) is attached to F(0) by a central stalk formed by the gamma and epsilon chains, while a peripheral stalk is formed by the delta, b and b' chains.

The protein localises to the plastid. It is found in the chloroplast thylakoid membrane. In terms of biological role, f(1)F(0) ATP synthase produces ATP from ADP in the presence of a proton or sodium gradient. F-type ATPases consist of two structural domains, F(1) containing the extramembraneous catalytic core and F(0) containing the membrane proton channel, linked together by a central stalk and a peripheral stalk. During catalysis, ATP synthesis in the catalytic domain of F(1) is coupled via a rotary mechanism of the central stalk subunits to proton translocation. Functionally, key component of the F(0) channel; it plays a direct role in translocation across the membrane. A homomeric c-ring of between 10-14 subunits forms the central stalk rotor element with the F(1) delta and epsilon subunits. This Thalassiosira pseudonana (Marine diatom) protein is ATP synthase subunit c, chloroplastic.